Reading from the N-terminus, the 218-residue chain is Probable chemoreceptor glutamine deamidase CheD (218 aa).

The protein belongs to the CheD family.

The enzyme catalyses L-glutaminyl-[protein] + H2O = L-glutamyl-[protein] + NH4(+). In terms of biological role, probably deamidates glutamine residues to glutamate on methyl-accepting chemotaxis receptors (MCPs), playing an important role in chemotaxis. This Saccharophagus degradans (strain 2-40 / ATCC 43961 / DSM 17024) protein is Probable chemoreceptor glutamine deamidase CheD.